A 161-amino-acid chain; its full sequence is Large ribosomal subunit protein bL17 (161 aa).

Positions 126–161 (TAAKKAPKTRRSRKKATASVAEAPTAEAASEEKAAE) are disordered. Basic residues predominate over residues 130–141 (KAPKTRRSRKKA). Positions 142–153 (TASVAEAPTAEA) are enriched in low complexity.

This sequence belongs to the bacterial ribosomal protein bL17 family. Part of the 50S ribosomal subunit. Contacts protein L32.

The polypeptide is Large ribosomal subunit protein bL17 (Parabacteroides distasonis (strain ATCC 8503 / DSM 20701 / CIP 104284 / JCM 5825 / NCTC 11152)).